The following is a 470-amino-acid chain: Cysteine--tRNA ligase (470 aa).

Cys-31 contacts Zn(2+). A 'HIGH' region motif is present at residues 33-43 (PTVYDYVHIGH). Residues Cys-209, His-234, and Glu-238 each contribute to the Zn(2+) site. A 'KMSKS' region motif is present at residues 266-270 (KMSKS). Lys-269 is an ATP binding site.

The protein belongs to the class-I aminoacyl-tRNA synthetase family. Requires Zn(2+) as cofactor.

The protein localises to the cytoplasm. It carries out the reaction tRNA(Cys) + L-cysteine + ATP = L-cysteinyl-tRNA(Cys) + AMP + diphosphate. This chain is Cysteine--tRNA ligase, found in Saccharolobus solfataricus (strain ATCC 35092 / DSM 1617 / JCM 11322 / P2) (Sulfolobus solfataricus).